The sequence spans 752 residues: Cation-transporting P-type ATPase B (752 aa).

The HMA domain occupies 15 to 78; sequence RRIRLDVLGM…VVEKAGYHAA (64 aa). 2 residues coordinate a metal cation: cysteine 26 and cysteine 29. The next 6 helical transmembrane spans lie at 105–125, 132–152, 167–187, 201–221, 361–381, and 390–410; these read LLVAAVLFVPLADLSTLFAIV, GWGYILTALAAPVVTWAAWPF, METLISVGIVAATAWSLSSVF, AILNSDSIYLEVAAGVTVFVL, IAGVFVPVVFVIAGLAGAAWL, and AFSVTLGVLVIACPCALGLAT. The 4-aspartylphosphate intermediate role is filled by aspartate 446. The next 2 membrane-spanning stretches (helical) occupy residues 491-511 and 714-734; these read MAAAIVAASPDPGPVNGFVAV and AIPIAAAGLLNPLIAGAAMAF.

The protein belongs to the cation transport ATPase (P-type) (TC 3.A.3) family. Type IB subfamily.

It localises to the cell membrane. It catalyses the reaction ATP + H2O = ADP + phosphate + H(+). This is Cation-transporting P-type ATPase B (ctpB) from Mycobacterium tuberculosis (strain ATCC 25618 / H37Rv).